Here is a 448-residue protein sequence, read N- to C-terminus: NK1 transcription factor-related protein 1 (448 aa).

The span at 1–13 shows a compositional bias: low complexity; it reads MSASGPEAPGDIP. Disordered regions lie at residues 1-80, 115-299, and 350-397; these read MSAS…LRPT, ASAP…PRRA, and KWKK…GAPL. Positions 14-30 are enriched in pro residues; the sequence is ALPPPPQPGSGPAPPAP. Low complexity-rich tracts occupy residues 62–79 and 115–129; these read PAAP…PLRP and ASAP…SGRP. Residues 130 to 139 show a composition bias toward basic and acidic residues; the sequence is PRAEELERRA. Residues 186–203 are compositionally biased toward acidic residues; the sequence is SGDEVPDDEDDDEDEAPE. The segment covering 205–214 has biased composition (basic and acidic residues); it reads EAARGAEEAR. 2 stretches are compositionally biased toward gly residues: residues 215 to 227 and 259 to 270; these read GGGG…GSGC and PPGGAAAPGGAG. The span at 271–280 shows a compositional bias: low complexity; sequence TTPQGTATAA. The segment at residues 296–355 is a DNA-binding region (homeobox); sequence PRRARTAFTYEQLVALENKFKATRYLSVCERLNLALSLSLTETQVKIWFQNRRTKWKKQN. A compositionally biased stretch (gly residues) spans 364 to 382; that stretch reads TGGGGGPGPGAGPGTGLPG.

It belongs to the NK-1 homeobox family. As to expression, expressed in hemopoietic progenitor cells.

It localises to the nucleus. May be required for the coordinated crosstalk of factors involved in the maintenance of energy homeostasis, possibly by regulating the transcription of specific factors involved in energy balance. This chain is NK1 transcription factor-related protein 1, found in Homo sapiens (Human).